The sequence spans 119 residues: uncharacterized protein (119 aa).

The disordered stretch occupies residues 1–20; that stretch reads MPHLAAEAHTWPPHISHSTL. A helical membrane pass occupies residues 74–94; sequence LLFVVHQGHIGTGLIVFIICW.

Its subcellular location is the membrane. This is an uncharacterized protein from Saccharomyces cerevisiae (strain ATCC 204508 / S288c) (Baker's yeast).